Consider the following 25-residue polypeptide: Spinigerin (25 aa).

Its subcellular location is the secreted. Its function is as follows. Active against Gram-positive bacteria B.megaterium and M.luteus, Gram-negative bacteria E.coli SBS363 and D22, K.pneumoniae, S.typhimurium and P.aeruginosa, yeast C.albicans and filamentous fungi F.culmorum, N.crassa, N.hematococca and T.viridae. Inactive against Gram-positive bacteria B.subtilis, S.pyogenes, B.thuringiensis and S.aureus, Gram-negative bacteria E.cloacae and E.carotovora and filamentous fungus B.bassiana. The sequence is that of Spinigerin from Pseudacanthotermes spiniger.